A 1526-amino-acid polypeptide reads, in one-letter code: Ig-like and fibronectin type-III domain-containing protein 2 (1526 aa).

An N-terminal signal peptide occupies residues 1-19; sequence MMRWRLAVLFLTLLASTTG. Residues 20–39 form a disordered region; the sequence is DDTTTKASVSTTTKKGTDGP. The Extracellular segment spans residues 20–1415; sequence DDTTTKASVS…RRSASKGSSS (1396 aa). Over residues 24 to 33 the composition is skewed to low complexity; the sequence is TKASVSTTTK. Positions 39–170 constitute an Ig-like C2-type 1 domain; the sequence is PHLTTDDEGF…ELLEFQVEVL (132 aa). A disulfide bridge connects residues cysteine 61 and cysteine 154. N-linked (GlcNAc...) asparagine glycans are attached at residues asparagine 87, asparagine 143, asparagine 158, asparagine 181, asparagine 414, asparagine 427, asparagine 475, asparagine 489, asparagine 533, asparagine 590, asparagine 617, and asparagine 662. One can recognise a Fibronectin type-III 1 domain in the interval 379 to 470; that stretch reads APRGKRDVDF…VRNIASTNVH (92 aa). One can recognise a Fibronectin type-III 2 domain in the interval 587–678; it reads APGNVTISEL…TAKLFSTLPT (92 aa). The region spanning 682-724 is the WR1 domain; the sequence is PLCTIGEPIYMNDGRVMICDAVNPCPNGFRCTGAGSDLSYCCP. Residues asparagine 754, asparagine 871, asparagine 906, asparagine 939, asparagine 979, asparagine 1004, and asparagine 1049 are each glycosylated (N-linked (GlcNAc...) asparagine). Fibronectin type-III domains lie at 827–914 and 924–1020; these read AVRN…TKPA and APEK…AQKD. Residues 1116–1207 form the Ig-like C2-type 2 domain; the sequence is ASVTMKKDKI…SRVEASSEVI (92 aa). A disulfide bridge links cysteine 1137 with cysteine 1190. Residue asparagine 1250 is glycosylated (N-linked (GlcNAc...) asparagine). Residues 1314–1406 enclose the Fibronectin type-III 5 domain; it reads APSEVSNVRI…SAIPKDSEPR (93 aa). A helical transmembrane segment spans residues 1416–1436; that stretch reads AFWIVVILVVFGVLIAGLAVL. The Cytoplasmic portion of the chain corresponds to 1437-1526; the sequence is SKRRELPYPI…NGMRYAKLET (90 aa). The interval 1485 to 1518 is disordered; it reads SATTGTAAATQSEWQSANLEANSTTDNSHEYRNG. The span at 1495-1510 shows a compositional bias: polar residues; sequence QSEWQSANLEANSTTD.

It is found in the cell membrane. This Caenorhabditis elegans protein is Ig-like and fibronectin type-III domain-containing protein 2.